The chain runs to 364 residues: MSCIAVEAVLLGILLYIPIVLSDDRAPIPANSAQLNSWFDGIIQPVAVRKATMDPALVTAEGQAKVIKLKSDGSGDFKSINEAIKSIPDDNTKRVILSFSPGNYSEKVKIGMYKHYITFYGEDPNNMPILVFGGTAAEYGTVDSATLIVESNYFSAVNLKIVNSAPRPDGKRVGAQAAALRISGDKASFYNVKIYGFQDTLCDDKGKHFYKDCYIEGTVDFIFGSGKSIFLNTELHAVPGDQPAIITAQARKTESEDTGYYFVNCRVTGGGAFLGRSWMPAAKVVFAYTEMGDAIHPEGWILVKPEHESTVRFPEYNNKGPGANMEKRAKFVKRLSDAEAKQSISLGSIEASKWLLPPRVVGLP.

Positions 1–22 (MSCIAVEAVLLGILLYIPIVLS) are cleaved as a signal peptide. A glycan (N-linked (GlcNAc...) asparagine) is linked at asparagine 103. The active site involves aspartate 220.

The protein localises to the secreted. The catalysed reaction is [(1-&gt;4)-alpha-D-galacturonosyl methyl ester](n) + n H2O = [(1-&gt;4)-alpha-D-galacturonosyl](n) + n methanol + n H(+). Its pathway is glycan metabolism; pectin degradation; 2-dehydro-3-deoxy-D-gluconate from pectin: step 1/5. Functionally, catalyzes the demethylesterification of homogalacturonan components of pectin. The chain is Pectinesterase from Parthenium hysterophorus (Santa Maria feverfew).